Consider the following 205-residue polypeptide: THO complex subunit 7 homolog (205 aa).

The stretch at 68–158 (AMNERETENY…KESLVSKLEL (91 aa)) forms a coiled coil. Residues 181–205 (KTDEGTALSPQQSITSPGKVALMDT) are disordered.

It belongs to the THOC7 family. As to quaternary structure, component of the THO subcomplex of the transcription/export (TREX) complex which seems to have a dynamic structure involving ATP-dependent remodeling.

The protein localises to the cytoplasm. The protein resides in the nucleus. Its subcellular location is the nucleus speckle. Its function is as follows. May act as component of the THO subcomplex of the TREX complex which is thought to couple mRNA transcription, processing and nuclear export, and which specifically associates with spliced mRNA and not with unspliced pre-mRNA. The sequence is that of THO complex subunit 7 homolog (thoc7) from Nematostella vectensis (Starlet sea anemone).